Here is a 96-residue protein sequence, read N- to C-terminus: Mitochondrial import inner membrane translocase subunit Tim13-A (96 aa).

Residues 47–70 carry the Twin CX3C motif motif; the sequence is CFRKCIGKPGGSLDNSEQKCIAMC. 2 cysteine pairs are disulfide-bonded: C47–C70 and C51–C66.

This sequence belongs to the small Tim family. Heterohexamer; composed of 3 copies of TIMM8 (TIMM8A or TIMM8B) and 3 copies of TIMM13, named soluble 70 kDa complex. Associates with the TIM22 complex, whose core is composed of TIMM22.

The protein localises to the mitochondrion inner membrane. In terms of biological role, mitochondrial intermembrane chaperone that participates in the import and insertion of some multi-pass transmembrane proteins into the mitochondrial inner membrane. Also required for the transfer of beta-barrel precursors from the TOM complex to the sorting and assembly machinery (SAM complex) of the outer membrane. Acts as a chaperone-like protein that protects the hydrophobic precursors from aggregation and guide them through the mitochondrial intermembrane space. The TIMM8-TIMM13 complex mediates the import of some proteins while the predominant TIMM9-TIMM10 70 kDa complex mediates the import of much more proteins. In Xenopus laevis (African clawed frog), this protein is Mitochondrial import inner membrane translocase subunit Tim13-A (timm13-a).